Consider the following 59-residue polypeptide: MKLKIVLRRGLAGKDKAKKEAVRSLGLKKVGETVILEKNPMVCGNLEKVKHLVCVEELS.

Belongs to the universal ribosomal protein uL30 family. As to quaternary structure, part of the 50S ribosomal subunit.

The protein is Large ribosomal subunit protein uL30 of Hydrogenobaculum sp. (strain Y04AAS1).